Here is a 223-residue protein sequence, read N- to C-terminus: UPF0441 protein YgiB (223 aa).

Residues 178 to 195 (TVPKTAMAPKPATTTTVT) are compositionally biased toward low complexity. Residues 178-223 (TVPKTAMAPKPATTTTVTRGGFGESIAKQSTMQRSATGTSSRSMGG) form a disordered region. Residues 204-223 (AKQSTMQRSATGTSSRSMGG) are compositionally biased toward polar residues.

The protein belongs to the UPF0441 family.

This chain is UPF0441 protein YgiB, found in Shigella boydii serotype 4 (strain Sb227).